The sequence spans 63 residues: Large ribosomal subunit protein bL32 (63 aa).

Basic residues predominate over residues 1-18 (MAHPKRRISRSRRDKRRA). The disordered stretch occupies residues 1–27 (MAHPKRRISRSRRDKRRAQYNAKTKAP).

It belongs to the bacterial ribosomal protein bL32 family.

This is Large ribosomal subunit protein bL32 from Chloroherpeton thalassium (strain ATCC 35110 / GB-78).